The following is a 4592-amino-acid chain: Intermembrane lipid transfer protein vps13D (4592 aa).

The Chorein N-terminal domain maps to 3–102 (FESVVAEVID…SSTNVSSNYS (100 aa)). Disordered stretches follow at residues 95–142 (TNVS…TASQ), 157–199 (LDKK…IDSQ), 286–307 (STTS…SSSS), 445–529 (KKDD…IKGI), 574–605 (SNST…LSPM), 826–861 (NYNN…QQGI), 1040–1083 (TTSP…KRQW), 1219–1249 (YFKN…EKKP), 1655–1717 (QQQE…QQSN), 1855–1886 (SNNN…NSLF), 1971–2001 (TSSL…TTTS), 2025–2056 (PLIN…EQQQ), and 2245–2270 (NNNN…NIIN). 2 stretches are compositionally biased toward low complexity: residues 117-139 (SSSN…TTST) and 172-199 (KSTN…IDSQ). Positions 437 to 517 (KNATIKLNKK…KKKEEKGKSK (81 aa)) form a coiled coil. The span at 445–457 (KKDDKKDDKKDDI) shows a compositional bias: basic and acidic residues. A compositionally biased stretch (low complexity) spans 458-474 (NSSSSSIGSSNSSNNTP). Basic and acidic residues predominate over residues 475–529 (TKDKNKEKEKDKEKEKEKEKKKEKEKLKLEEKKKKKEEKGKSKSKDSKKNKIKGI). The segment covering 574–591 (SNSTTTNNSNNNSSSSPN) has biased composition (low complexity). A compositionally biased stretch (polar residues) spans 592 to 603 (ILATSPSNNSLS). The segment covering 829–838 (NQSSSSSSSS) has biased composition (low complexity). The segment covering 1040–1059 (TTSPTFNSLNNKPSTLQNNH) has biased composition (polar residues). Over residues 1064–1076 (NGNSSNNNNTDSP) the composition is skewed to low complexity. Residues 1234-1244 (NTEDDEQEEEE) are compositionally biased toward acidic residues. Low complexity-rich tracts occupy residues 1669 to 1689 (KSIN…LRKS) and 1702 to 1715 (QQQQ…QQQQ). Residues 2037–2048 (SKSSSSKSSSSK) are compositionally biased toward low complexity. The stretch at 2321–2354 (TLQINDLGANIISIGNKSTSIKCFLRSIRLSDSR) is one TPR 1 repeat. Disordered regions lie at residues 2456–2489 (KTNN…SIST), 2862–2882 (AVST…NNNG), 3006–3035 (GEQK…SSSS), 3106–3129 (NSSG…SSSN), 3356–3384 (KLPT…KRTT), 3560–3580 (NSLK…HRHN), and 3630–3679 (STNH…SKLK). Low complexity-rich tracts occupy residues 2458 to 2478 (NNNN…NNNN), 2864 to 2880 (STSN…SNNN), and 3015 to 3035 (TSTS…SSSS). The segment covering 3358–3384 (PTSPQTSSSSSPPPATTTTSTTTKRTT) has biased composition (low complexity). The span at 3569–3580 (KSKKQQQQHRHN) shows a compositional bias: basic residues. Residues 3640 to 3679 (SSTFNNSSNDNINNGNSNNNTSNSLSPPSSSSSINLSKLK) are compositionally biased toward low complexity. One copy of the TPR 2 repeat lies at 3789–3822 (EVPKPYLGRVDIKDNDTHTSIHFYDQDTEYSPFR). 2 stretches are compositionally biased toward low complexity: residues 3872–3894 (TTTT…NNNN) and 4111–4135 (QQLQ…NPIN). Disordered stretches follow at residues 3872–3897 (TTTT…NQYI) and 4105–4135 (KKHK…NPIN).

The protein resides in the membrane. Mediates the transfer of lipids between membranes at organelle contact sites. The sequence is that of Intermembrane lipid transfer protein vps13D (vps13D) from Dictyostelium discoideum (Social amoeba).